The primary structure comprises 427 residues: Large ribosomal subunit protein uL4 (427 aa).

N-acetylalanine is present on A2. K14 carries the N6-acetyllysine modification. R97 is subject to Omega-N-methylarginine. K106 carries the post-translational modification N6-acetyllysine. A Glycyl lysine isopeptide (Lys-Gly) (interchain with G-Cter in SUMO2) cross-link involves residue K239. At K259 the chain carries N6-acetyllysine. T266 carries the post-translational modification Phosphothreonine. A phosphoserine mark is found at S290 and S295. The residue at position 300 (R300) is a Citrulline. K327 is covalently cross-linked (Glycyl lysine isopeptide (Lys-Gly) (interchain with G-Cter in SUMO2)). K333 and K353 each carry N6-acetyllysine. The residue at position 364 (K364) is an N6-acetyllysine; alternate. K364 is covalently cross-linked (Glycyl lysine isopeptide (Lys-Gly) (interchain with G-Cter in SUMO1); alternate). S365 bears the Phosphoserine mark. Residues 369 to 427 (AAVAGKKPVVGKKGKKAAVGVKKQKKPLVGKKAAATKKPAPEKKPAEKKPTTEEKKPAA) are disordered. The span at 377-397 (VVGKKGKKAAVGVKKQKKPLV) shows a compositional bias: basic residues. The segment covering 407 to 427 (PAPEKKPAEKKPTTEEKKPAA) has biased composition (basic and acidic residues).

Belongs to the universal ribosomal protein uL4 family. In terms of assembly, component of the large ribosomal subunit. May bind IPO9 with low affinity. Interacts with RBM3. Post-translationally, citrullinated by PADI4.

The protein localises to the cytoplasm. Component of the large ribosomal subunit. The ribosome is a large ribonucleoprotein complex responsible for the synthesis of proteins in the cell. The chain is Large ribosomal subunit protein uL4 (RPL4) from Pongo abelii (Sumatran orangutan).